The sequence spans 418 residues: MLKSEMNIADFDADLWQAMQDEVERQEQHIELIASENYTSPRVMQAQGSQLTNKYAEGYPHKRYYGGCEFVDKVEDLAIERAKELFGAKYANVQPHSGSQANTAAFMAMMEAGDTFLGMSLAHGGHLTHGSGVNFSGKLYNAVSYGLDESTGEIDYAEVEKLAQEHKPKVIVAGFSAYSGIVDWAKFREIADKVDAYLMVDMAHVAGLVAAGVYPNPVPYAHVVTTTTHKTLAGPRGGLIISGSDDEKLHKKLNSAVFPGNQGGPLCHVIAGKAVAFQEALQPEFKDYQKQVLVNANAMVKTMQARGYKIVSNGTQNHLFLVDLIDKDITGKDADAALGNAFITVNKNAVPNDPRSPFVTSGLRLGTPAITRRGFKEAEAEQVANWICDVLDDIADESKINQVREQVKALCAKFPVYG.

Residues L121 and 125 to 127 (GHL) contribute to the (6S)-5,6,7,8-tetrahydrofolate site. The residue at position 230 (K230) is an N6-(pyridoxal phosphate)lysine. Residue 356–358 (SPF) coordinates (6S)-5,6,7,8-tetrahydrofolate.

This sequence belongs to the SHMT family. As to quaternary structure, homodimer. Pyridoxal 5'-phosphate is required as a cofactor.

The protein resides in the cytoplasm. The catalysed reaction is (6R)-5,10-methylene-5,6,7,8-tetrahydrofolate + glycine + H2O = (6S)-5,6,7,8-tetrahydrofolate + L-serine. The protein operates within one-carbon metabolism; tetrahydrofolate interconversion. Its pathway is amino-acid biosynthesis; glycine biosynthesis; glycine from L-serine: step 1/1. In terms of biological role, catalyzes the reversible interconversion of serine and glycine with tetrahydrofolate (THF) serving as the one-carbon carrier. This reaction serves as the major source of one-carbon groups required for the biosynthesis of purines, thymidylate, methionine, and other important biomolecules. Also exhibits THF-independent aldolase activity toward beta-hydroxyamino acids, producing glycine and aldehydes, via a retro-aldol mechanism. This Idiomarina loihiensis (strain ATCC BAA-735 / DSM 15497 / L2-TR) protein is Serine hydroxymethyltransferase.